A 434-amino-acid polypeptide reads, in one-letter code: Serine hydroxymethyltransferase 2 (434 aa).

(6S)-5,6,7,8-tetrahydrofolate-binding positions include L136 and G140–L142. At K245 the chain carries N6-(pyridoxal phosphate)lysine.

It belongs to the SHMT family. In terms of assembly, homodimer. Pyridoxal 5'-phosphate serves as cofactor.

It is found in the cytoplasm. It carries out the reaction (6R)-5,10-methylene-5,6,7,8-tetrahydrofolate + glycine + H2O = (6S)-5,6,7,8-tetrahydrofolate + L-serine. It functions in the pathway one-carbon metabolism; tetrahydrofolate interconversion. It participates in amino-acid biosynthesis; glycine biosynthesis; glycine from L-serine: step 1/1. In terms of biological role, catalyzes the reversible interconversion of serine and glycine with tetrahydrofolate (THF) serving as the one-carbon carrier. This reaction serves as the major source of one-carbon groups required for the biosynthesis of purines, thymidylate, methionine, and other important biomolecules. Also exhibits THF-independent aldolase activity toward beta-hydroxyamino acids, producing glycine and aldehydes, via a retro-aldol mechanism. This chain is Serine hydroxymethyltransferase 2, found in Rhodopseudomonas palustris (strain ATCC BAA-98 / CGA009).